We begin with the raw amino-acid sequence, 251 residues long: Imidazole glycerol phosphate synthase subunit HisF (251 aa).

Active-site residues include D11 and D130.

The protein belongs to the HisA/HisF family. In terms of assembly, heterodimer of HisH and HisF.

It is found in the cytoplasm. The enzyme catalyses 5-[(5-phospho-1-deoxy-D-ribulos-1-ylimino)methylamino]-1-(5-phospho-beta-D-ribosyl)imidazole-4-carboxamide + L-glutamine = D-erythro-1-(imidazol-4-yl)glycerol 3-phosphate + 5-amino-1-(5-phospho-beta-D-ribosyl)imidazole-4-carboxamide + L-glutamate + H(+). Its pathway is amino-acid biosynthesis; L-histidine biosynthesis; L-histidine from 5-phospho-alpha-D-ribose 1-diphosphate: step 5/9. In terms of biological role, IGPS catalyzes the conversion of PRFAR and glutamine to IGP, AICAR and glutamate. The HisF subunit catalyzes the cyclization activity that produces IGP and AICAR from PRFAR using the ammonia provided by the HisH subunit. The sequence is that of Imidazole glycerol phosphate synthase subunit HisF from Cytophaga hutchinsonii (strain ATCC 33406 / DSM 1761 / CIP 103989 / NBRC 15051 / NCIMB 9469 / D465).